Here is a 350-residue protein sequence, read N- to C-terminus: Sodium/calcium exchanger MaX1 (350 aa).

10 consecutive transmembrane segments (helical) span residues 4 to 24 (VNFL…DYFV), 39 to 59 (FVIG…ASSI), 69 to 89 (IVIG…VGVA), 101 to 121 (MLKR…VFAF), 125 to 145 (LSML…FFLF), 202 to 222 (GGFA…VIGA), 242 to 264 (VIGT…VSAA), 276 to 296 (VIGS…LFYP), 302 to 322 (MSLF…LIFI), and 330 to 350 (RWEG…LFYI).

Belongs to the Ca(2+):cation antiporter (CaCA) (TC 2.A.19) family.

It localises to the cell membrane. Its activity is regulated as follows. Calcium transport is inhibited by Na(+), K(+), Li(+), Mg(2+) or Mn(2+). Its function is as follows. Catalyzes Na(+)/Ca(2+) exchange. The transport is electrogenic with a likely stoichiometry of 3 or more Na(+) for each Ca(2+). Is K(+)-independent. In Methanosarcina acetivorans (strain ATCC 35395 / DSM 2834 / JCM 12185 / C2A), this protein is Sodium/calcium exchanger MaX1 (maX1).